The sequence spans 140 residues: Thioredoxin H9 (140 aa).

Gly-2 carries the N-myristoyl glycine lipid modification. Cys-4 carries S-palmitoyl cysteine lipidation. Ser-14 carries the post-translational modification Phosphoserine. The region spanning 25-129 (VHLITTKESW…PELQKKVTSI (105 aa)) is the Thioredoxin domain. Active-site nucleophile residues include Cys-57 and Cys-60. Cys-57 and Cys-60 are joined by a disulfide. Ser-136 carries the post-translational modification Phosphoserine.

This sequence belongs to the thioredoxin family. Plant H-type subfamily. In terms of tissue distribution, ubiquitous.

Its subcellular location is the cell membrane. Its function is as follows. Probable thiol-disulfide oxidoreductase that may play a role in intercellular communication due to its ability to move from cell to cell. The protein is Thioredoxin H9 (TRX9) of Arabidopsis thaliana (Mouse-ear cress).